The following is a 338-amino-acid chain: UPF0104 membrane protein MTH_1261 (338 aa).

Helical transmembrane passes span alanine 6–glycine 26, aspartate 36–leucine 56, leucine 124–phenylalanine 144, tryptophan 149–leucine 169, isoleucine 231–glycine 251, isoleucine 254–leucine 274, leucine 275–valine 295, and isoleucine 310–valine 330.

The protein belongs to the UPF0104 family.

The protein localises to the cell membrane. In Methanothermobacter thermautotrophicus (strain ATCC 29096 / DSM 1053 / JCM 10044 / NBRC 100330 / Delta H) (Methanobacterium thermoautotrophicum), this protein is UPF0104 membrane protein MTH_1261.